Here is a 297-residue protein sequence, read N- to C-terminus: Lipoyl synthase (297 aa).

7 residues coordinate [4Fe-4S] cluster: Cys40, Cys45, Cys51, Cys67, Cys71, Cys74, and Ser280. The 217-residue stretch at 53–269 folds into the Radical SAM core domain; the sequence is AVRKTATFMI…KEIALSKGFS (217 aa).

Belongs to the radical SAM superfamily. Lipoyl synthase family. It depends on [4Fe-4S] cluster as a cofactor.

It is found in the cytoplasm. It carries out the reaction [[Fe-S] cluster scaffold protein carrying a second [4Fe-4S](2+) cluster] + N(6)-octanoyl-L-lysyl-[protein] + 2 oxidized [2Fe-2S]-[ferredoxin] + 2 S-adenosyl-L-methionine + 4 H(+) = [[Fe-S] cluster scaffold protein] + N(6)-[(R)-dihydrolipoyl]-L-lysyl-[protein] + 4 Fe(3+) + 2 hydrogen sulfide + 2 5'-deoxyadenosine + 2 L-methionine + 2 reduced [2Fe-2S]-[ferredoxin]. The protein operates within protein modification; protein lipoylation via endogenous pathway; protein N(6)-(lipoyl)lysine from octanoyl-[acyl-carrier-protein]. Its function is as follows. Catalyzes the radical-mediated insertion of two sulfur atoms into the C-6 and C-8 positions of the octanoyl moiety bound to the lipoyl domains of lipoate-dependent enzymes, thereby converting the octanoylated domains into lipoylated derivatives. This chain is Lipoyl synthase, found in Bacillus cereus (strain ATCC 14579 / DSM 31 / CCUG 7414 / JCM 2152 / NBRC 15305 / NCIMB 9373 / NCTC 2599 / NRRL B-3711).